Reading from the N-terminus, the 379-residue chain is MCDSPATTGKPTILFIADPCETSATLNSKAFKEKFRILRYQLDTKEAFLNFLERHEQDKICAIYAGFPAFKKIGGMTRSIIEHKSFPRKNLKCIVLCSRGYDGWDLDTLRKHEIRLYNYQDDENEKLIDDLKLHQVGNDVADCALWHILEGFRKFSYYQKLSRETGNTLTARAKAAEKSGFAFGHELGNMFAESPRGKKCLILGLGSIGKQVAYKLQYGLGMEIHYCKRSEDCTMSQNESWKFHLLDETIYAKLYQFHAIVVTLPGTPQTEHLINRKFLEHCNPGLILVNLGRGKILDLRAVSDALVTGRINHLGLDVFNKEPEIDEKIRSSDRLTSITPHLGSATKDVFEQSCELALTRILRVVSGEAASDEHFSRVV.

NAD(+) is bound by residues 207-208, 291-293, and D317; these read SI and LGR. The active site involves R293. The active site involves E322. The Proton donor role is filled by H341. 341–344 provides a ligand contact to NAD(+); the sequence is HLGS.

Belongs to the D-isomer specific 2-hydroxyacid dehydrogenase family.

This is Putative 2-hydroxyacid dehydrogenase YGL185C from Saccharomyces cerevisiae (strain ATCC 204508 / S288c) (Baker's yeast).